The chain runs to 685 residues: Heat shock protein homolog SSE1 (685 aa).

A disordered region spans residues 651–685 (QALRSNQEASKMADLSAKLAAQRKAEAEAKENAKE). Basic and acidic residues predominate over residues 673–685 (RKAEAEAKENAKE).

This sequence belongs to the heat shock protein 70 family.

It is found in the cytoplasm. This Naumovozyma castellii (Yeast) protein is Heat shock protein homolog SSE1 (SSE1).